A 122-amino-acid chain; its full sequence is Large ribosomal subunit protein uL14 (122 aa).

Belongs to the universal ribosomal protein uL14 family. In terms of assembly, part of the 50S ribosomal subunit. Forms a cluster with proteins L3 and L19. In the 70S ribosome, L14 and L19 interact and together make contacts with the 16S rRNA in bridges B5 and B8.

In terms of biological role, binds to 23S rRNA. Forms part of two intersubunit bridges in the 70S ribosome. The chain is Large ribosomal subunit protein uL14 from Alkaliphilus oremlandii (strain OhILAs) (Clostridium oremlandii (strain OhILAs)).